A 352-amino-acid polypeptide reads, in one-letter code: MDYQVSSPIYDIDYGASEPCRKTDVKQMGAHLLPPLYSMVFLFGFVGNMLVVLILVNCKRPKSMTDIYLLNLAISDLLFLFTVPFWAHYAAGQWDFGNTMCQFLTGLYFIGFFSGIFFIILLTIDRYLAIVHAVFALKARTVTFGVMTSVITWVVAVFASLPGIIFTRSQKEGYHYTCSPHFPFGQYQFWKNFETLKMVILGLVLPLLVMVICYSGILKTLLRCRNEKKRHRAVRLIFTIMIVYFLFWAPYNIVLLLNTYQEFFGLNNCSSSNRLDQAMQVTETLGMTHCCVNPIIYAFVGEKFRNYLLVFFQKHIAKCFCECCSIFQKEAPERANSVYTRSTGEQEISVGL.

The Extracellular segment spans residues 1–30; sequence MDYQVSSPIYDIDYGASEPCRKTDVKQMGA. The residue at position 3 (Tyr3) is a Sulfotyrosine. Residues Ser6 and Ser7 are each glycosylated (O-linked (GalNAc...) serine). Sulfotyrosine occurs at positions 10 and 14. Intrachain disulfides connect Cys20-Cys269 and Cys101-Cys178. The chain crosses the membrane as a helical span at residues 31–58; the sequence is HLLPPLYSMVFLFGFVGNMLVVLILVNC. Residues 59-68 lie on the Cytoplasmic side of the membrane; that stretch reads KRPKSMTDIY. The chain crosses the membrane as a helical span at residues 69–89; sequence LLNLAISDLLFLFTVPFWAHY. The Extracellular portion of the chain corresponds to 90–102; it reads AAGQWDFGNTMCQ. A helical membrane pass occupies residues 103–124; sequence FLTGLYFIGFFSGIFFIILLTI. At 125–141 the chain is on the cytoplasmic side; it reads DRYLAIVHAVFALKART. A helical transmembrane segment spans residues 142-166; sequence VTFGVMTSVITWVVAVFASLPGIIF. The Extracellular portion of the chain corresponds to 167 to 198; it reads TRSQKEGYHYTCSPHFPFGQYQFWKNFETLKM. Residues 199–218 form a helical membrane-spanning segment; it reads VILGLVLPLLVMVICYSGIL. Topologically, residues 219 to 235 are cytoplasmic; sequence KTLLRCRNEKKRHRAVR. Residues 236 to 260 form a helical membrane-spanning segment; sequence LIFTIMIVYFLFWAPYNIVLLLNTY. Over 261-277 the chain is Extracellular; sequence QEFFGLNNCSSSNRLDQ. The helical transmembrane segment at 278-301 threads the bilayer; it reads AMQVTETLGMTHCCVNPIIYAFVG. At 302–352 the chain is on the cytoplasmic side; it reads EKFRNYLLVFFQKHIAKCFCECCSIFQKEAPERANSVYTRSTGEQEISVGL. Residues Cys321, Cys323, and Cys324 are each lipidated (S-palmitoyl cysteine). Phosphoserine; by BARK1 is present on residues Ser337, Ser342, and Ser349.

The protein belongs to the G-protein coupled receptor 1 family. As to quaternary structure, interacts with PRAF2. Efficient ligand binding to CCL3/MIP-1alpha and CCL4/MIP-1beta requires sulfation, O-glycosylation and sialic acid modifications. Glycosylation on Ser-6 is required for efficient binding of CCL4. Interacts with GRK2. Interacts with ARRB1 and ARRB2. Interacts with CNIH4. Interacts with S100A4; this interaction stimulates T-lymphocyte chemotaxis. In terms of processing, sulfated on at least 2 of the N-terminal tyrosines. Sulfation is required for efficient binding of the chemokines, CCL3 and CCL4. Post-translationally, palmitoylation in the C-terminal is important for cell surface expression. Phosphorylation on serine residues in the C-terminal is stimulated by binding CC chemokines especially by APO-RANTES. In terms of processing, O-glycosylated, but not N-glycosylated. Ser-6 appears to be the major site even if Ser-7 may be also O-glycosylated. Also sialylated glycans present which contribute to chemokine binding. Ser-17 may also be glycosylated and, if so, with small moieties such as a T-antigen.

Its subcellular location is the cell membrane. Functionally, receptor for a number of inflammatory CC-chemokines including CCL3/MIP-1-alpha, CCL4/MIP-1-beta and RANTES and subsequently transduces a signal by increasing the intracellular calcium ion level. May play a role in the control of granulocytic lineage proliferation or differentiation. Participates in T-lymphocyte migration to the infection site by acting as a chemotactic receptor. The sequence is that of C-C chemokine receptor type 5 (CCR5) from Ateles geoffroyi (Black-handed spider monkey).